A 131-amino-acid chain; its full sequence is Profilin (131 aa).

It belongs to the profilin family. As to quaternary structure, occurs in many kinds of cells as a complex with monomeric actin in a 1:1 ratio.

Its subcellular location is the cytoplasm. The protein localises to the cytoskeleton. Functionally, binds to actin and affects the structure of the cytoskeleton. At high concentrations, profilin prevents the polymerization of actin, whereas it enhances it at low concentrations. By binding to PIP2, it inhibits the formation of IP3 and DG. This Pyrus communis (Pear) protein is Profilin.